A 326-amino-acid polypeptide reads, in one-letter code: Thiazole synthase (326 aa).

Residue Lys-168 is the Schiff-base intermediate with DXP of the active site. 1-deoxy-D-xylulose 5-phosphate is bound by residues Gly-229, 255–256 (AG), and 277–278 (NT).

This sequence belongs to the ThiG family. As to quaternary structure, homotetramer. Forms heterodimers with either ThiH or ThiS.

It is found in the cytoplasm. It carries out the reaction [ThiS sulfur-carrier protein]-C-terminal-Gly-aminoethanethioate + 2-iminoacetate + 1-deoxy-D-xylulose 5-phosphate = [ThiS sulfur-carrier protein]-C-terminal Gly-Gly + 2-[(2R,5Z)-2-carboxy-4-methylthiazol-5(2H)-ylidene]ethyl phosphate + 2 H2O + H(+). The protein operates within cofactor biosynthesis; thiamine diphosphate biosynthesis. Functionally, catalyzes the rearrangement of 1-deoxy-D-xylulose 5-phosphate (DXP) to produce the thiazole phosphate moiety of thiamine. Sulfur is provided by the thiocarboxylate moiety of the carrier protein ThiS. In vitro, sulfur can be provided by H(2)S. The chain is Thiazole synthase from Magnetococcus marinus (strain ATCC BAA-1437 / JCM 17883 / MC-1).